We begin with the raw amino-acid sequence, 113 residues long: Ribonuclease P protein component (113 aa).

The protein belongs to the RnpA family. As to quaternary structure, consists of a catalytic RNA component (M1 or rnpB) and a protein subunit.

The catalysed reaction is Endonucleolytic cleavage of RNA, removing 5'-extranucleotides from tRNA precursor.. RNaseP catalyzes the removal of the 5'-leader sequence from pre-tRNA to produce the mature 5'-terminus. It can also cleave other RNA substrates such as 4.5S RNA. The protein component plays an auxiliary but essential role in vivo by binding to the 5'-leader sequence and broadening the substrate specificity of the ribozyme. In Clostridium novyi (strain NT), this protein is Ribonuclease P protein component.